Here is a 58-residue protein sequence, read N- to C-terminus: Probable ferredoxin (58 aa).

4Fe-4S ferredoxin-type domains lie at 2–30 and 31–58; these read VAKV…LNDD and GIAT…ITIE. 8 residues coordinate [4Fe-4S] cluster: C10, C13, C16, C20, C40, C43, C46, and C50.

The cofactor is [4Fe-4S] cluster.

Ferredoxins are iron-sulfur proteins that transfer electrons in a wide variety of metabolic reactions. This Methanosarcina thermophila protein is Probable ferredoxin.